We begin with the raw amino-acid sequence, 260 residues long: Small ribosomal subunit protein uS2 (260 aa).

Residues 228 to 240 (RKETKAENAEEAM) are compositionally biased toward basic and acidic residues. A disordered region spans residues 228-260 (RKETKAENAEEAMKQAAEAEAEAAAPAAEESAE). The span at 241-260 (KQAAEAEAEAAAPAAEESAE) shows a compositional bias: low complexity.

Belongs to the universal ribosomal protein uS2 family.

The chain is Small ribosomal subunit protein uS2 from Oleidesulfovibrio alaskensis (strain ATCC BAA-1058 / DSM 17464 / G20) (Desulfovibrio alaskensis).